The sequence spans 115 residues: NAD(P)H-quinone oxidoreductase subunit M (115 aa).

Belongs to the complex I NdhM subunit family. In terms of assembly, NDH-1 can be composed of about 15 different subunits; different subcomplexes with different compositions have been identified which probably have different functions.

Its subcellular location is the cellular thylakoid membrane. It carries out the reaction a plastoquinone + NADH + (n+1) H(+)(in) = a plastoquinol + NAD(+) + n H(+)(out). The enzyme catalyses a plastoquinone + NADPH + (n+1) H(+)(in) = a plastoquinol + NADP(+) + n H(+)(out). Functionally, NDH-1 shuttles electrons from an unknown electron donor, via FMN and iron-sulfur (Fe-S) centers, to quinones in the respiratory and/or the photosynthetic chain. The immediate electron acceptor for the enzyme in this species is believed to be plastoquinone. Couples the redox reaction to proton translocation, and thus conserves the redox energy in a proton gradient. Cyanobacterial NDH-1 also plays a role in inorganic carbon-concentration. This is NAD(P)H-quinone oxidoreductase subunit M from Prochlorococcus marinus subsp. pastoris (strain CCMP1986 / NIES-2087 / MED4).